The following is a 377-amino-acid chain: Erythronate-4-phosphate dehydrogenase (377 aa).

Positions 45 and 67 each coordinate substrate. NAD(+) is bound by residues 127 to 128 (QV), aspartate 147, and threonine 176. Arginine 209 is an active-site residue. Aspartate 233 contacts NAD(+). Glutamate 238 is an active-site residue. The Proton donor role is filled by histidine 255. NAD(+) is bound at residue glycine 258. Tyrosine 259 contacts substrate.

It belongs to the D-isomer specific 2-hydroxyacid dehydrogenase family. PdxB subfamily. Homodimer.

It is found in the cytoplasm. The catalysed reaction is 4-phospho-D-erythronate + NAD(+) = (R)-3-hydroxy-2-oxo-4-phosphooxybutanoate + NADH + H(+). Its pathway is cofactor biosynthesis; pyridoxine 5'-phosphate biosynthesis; pyridoxine 5'-phosphate from D-erythrose 4-phosphate: step 2/5. Catalyzes the oxidation of erythronate-4-phosphate to 3-hydroxy-2-oxo-4-phosphonooxybutanoate. The chain is Erythronate-4-phosphate dehydrogenase from Vibrio atlanticus (strain LGP32) (Vibrio splendidus (strain Mel32)).